A 468-amino-acid chain; its full sequence is UDP-N-acetylmuramate--L-alanine ligase (468 aa).

121 to 127 (GSHGKTT) contributes to the ATP binding site.

Belongs to the MurCDEF family.

The protein resides in the cytoplasm. The catalysed reaction is UDP-N-acetyl-alpha-D-muramate + L-alanine + ATP = UDP-N-acetyl-alpha-D-muramoyl-L-alanine + ADP + phosphate + H(+). It participates in cell wall biogenesis; peptidoglycan biosynthesis. Its function is as follows. Cell wall formation. The polypeptide is UDP-N-acetylmuramate--L-alanine ligase (Borrelia garinii subsp. bavariensis (strain ATCC BAA-2496 / DSM 23469 / PBi) (Borreliella bavariensis)).